A 735-amino-acid polypeptide reads, in one-letter code: Disintegrin and metalloproteinase domain-containing protein 2 (735 aa).

Residues 1–16 (MWRVLFLLSGLGGLRM) form the signal peptide. Positions 17-174 (DSNFDSLPVQ…FKLQSVEPQQ (158 aa)) are excised as a propeptide. N-linked (GlcNAc...) asparagine glycans are attached at residues Asn122 and Asn220. The Extracellular portion of the chain corresponds to 175–686 (DFAKYIEMHV…ENIYHSKPMR (512 aa)). The Peptidase M12B domain occupies 178–375 (KYIEMHVIVE…QKSQCLHNQP (198 aa)). Cystine bridges form between Cys287–Cys370, Cys329–Cys354, Cys331–Cys336, and Cys445–Cys465. Residues Asn353, Asn459, and Asn566 are each glycosylated (N-linked (GlcNAc...) asparagine). Positions 384–473 (QAVCGNAKLE…SCPENHYVQT (90 aa)) constitute a Disintegrin domain. The region spanning 612–645 (LGYDCTTDKCNDRGVCNNKKHCHCSASYLPPDCS) is the EGF-like domain. 3 disulfides stabilise this stretch: Cys616–Cys627, Cys621–Cys633, and Cys635–Cys644. A helical transmembrane segment spans residues 687-707 (WPFFLFIPFFIIFCVLIAIMV). Over 708–735 (KVNFQRKKWRTEDYSSDEQPESESEPKG) the chain is Cytoplasmic. Ser729 carries the phosphoserine modification.

The prodomain and the metalloprotease domain are cleaved during the epididymal maturation of the spermatozoa. Expressed specifically in spermatogenic cells in the seminiferous cells. Not detected in fetal tissues.

The protein resides in the membrane. In terms of biological role, sperm surface membrane protein that may be involved in sperm-egg plasma membrane adhesion and fusion during fertilization. Could have a direct role in sperm-zona binding or migration of sperm from the uterus into the oviduct. Interactions with egg membrane could be mediated via binding between its disintegrin-like domain to one or more integrins receptors on the egg. This is a non catalytic metalloprotease-like protein. This is Disintegrin and metalloproteinase domain-containing protein 2 (ADAM2) from Homo sapiens (Human).